Consider the following 1249-residue polypeptide: MEEVITIAQIVHRGTDILSLNNEEIEALVDEIYSTLKGSNDIKNIRLIDFLFTLKDFVNHVRAEQSKLPDLSMPMEAYIRQLLVDSDVVPIVSEKKKELRVRPSTRKEIFLINGTHLAVPAEAPIEIYGLKLRLKTFSPQCFMRMAEIGSFSPETLGYVASGANLTNFIRVFMKCVDQETWKKNGEGVVVTTKENIIQFTHQYIELYKFLRSGGHSWLINRLAEEMVHRKLDREDQGSHISNIVETEEIEPEENIKRVIFFLKELSTMYSVSPVFTSGYMPLLYDLYRAGYLEVLWNPVEQKFLQHAEQREKEQMILQQVDMKLMEVTTQARQYFKIMEEKIGRVQSDAIREILTMEGKVDDPNSILQEVIKACGKQEAELITTEYLNIKKQWELQEKNACAHLKLVKQLRSGLQYAESLKVLESIRVLYKEKNNTTNWNLCKACGFKLLCPHVDMLIQLQAAEASYDTMRTKLMKFSGINKEKENNQGLIYSYFCKICGEELAHFIQEDRTADVGVIGDLNSKLRIFIWQETMKACTFIHFGKLVDVKQFANIAVNVCLPLVYSIENIKKEEDYDPLTQLYAVIYIYAYILNLIYSSQKNKEFLTITIHGMKADSSLNAYVTFLLEKMMQQYSGIINQLSEITDQWIANNFREAFKKIIHQNGLQGLSVQDDTKVLLTEILLDPLYDYAATVARIDGSIPMYKPRTPKEAEYEFKTVIGRTPAELLSQKEFYDKIYTSKYRPDFTQLARLKDIYFQEESLRVWWGGRDEEKTSTLIYLRAYELFLKYLQNAPNFNSELAEFKTYENAYGEQKALLAQQGFYNIFDPNTGRADQRTRLFEYKRLPISTLYDERGLPHKWTIYVYKAVDSSQKPAEIEVTRKDVIKKIDDHYALADLRCSVCHVLQHEVGQLNIKKVQTALKASLEFNTFYAFYESRCPKGGLHDFQDKKCVKCGLFTYIIYDHLSQPELVHDYYNNYKDQYDKEKMSIRSIQIKKDMTTPSTETQPKPPQEPWTFDYGKIIKTAKILDISPAVIEAIGAMEGRSYADIREGQGAPPPPTSMDDPRLMAVDSAVRIFLYNYNCLRHVSTFNKPPMHVERLVKHLSYEEKEDLEKVLPNVVNEYHTTFKHLRVTDPASALLYSIEFLCISFLTLYEIKEPSWVVNIVREFALTELNTIIQSEKLLSKPGAFNFMIFGEDFVCSGEDSSMDDISAYSSPGLFGEDIIDRLDDPFSIEDVDISLDVLDNLAPQ.

Belongs to the asfivirus M1249L family. In terms of assembly, interacts with the minor capsid protein p17 and with the hexon capsid protein p72 capsomers; these interactions form a rigid zipper structure that stabilizes the capsomers. Interacts with host IRF3.

It localises to the virion. It is found in the host cytoplasm. Its function is as follows. Together with the penton and the other minor capsid proteins (p17, p49), forms a complicated network immediately below the outer capsid shell, stabilizing the whole capsid. In addition, blocks IFN-beta transactivation mediated by the cGAS-STING pathway and regulates the transcriptional activity of IFN-beta. Mechanistically, suppresses the phosphorylation of host key adapter protein TBK1 and degrades host IRF3 in the cytoplasm. The polypeptide is Minor capsid protein M1249L (African swine fever virus (isolate Tick/South Africa/Pretoriuskop Pr4/1996) (ASFV)).